A 387-amino-acid chain; its full sequence is TSC22 domain family protein 4 (387 aa).

2 disordered regions span residues 1-85 (MSGG…GEPY) and 135-232 (ISTP…RRDG). Positions 28–51 (SDPPAPPAPAGPPPRLPNGEPNPD) are enriched in pro residues. Phosphothreonine is present on Thr-57. Ser-62 and Ser-165 each carry phosphoserine. Thr-183 carries the post-translational modification Phosphothreonine. 2 positions are modified to phosphoserine: Ser-187 and Ser-189. Residue Thr-223 is modified to Phosphothreonine. A phosphoserine mark is found at Ser-254, Ser-258, and Ser-271. The leucine-zipper stretch occupies residues 336 to 357 (LKEQIRDLAERNAALEQENGLL). Ser-362 bears the Phosphoserine mark. Residues 368–387 (QLPSSGLPRLGPSAPNGPSI) form a disordered region.

It belongs to the TSC-22/Dip/Bun family. In terms of assembly, forms a homodimer or heterodimer. Forms a heterodimer with TSC22D1 isoforms 1 and 2. Interacts with NRBP1.

It localises to the nucleus. The protein localises to the cytoplasm. Its subcellular location is the cell projection. The protein resides in the dendrite. It is found in the synapse. In terms of biological role, binds DNA and acts as a transcriptional repressor. Involved in the regulation of systematic glucose homeostasis and insulin sensitivity, via transcriptional repression of downstream insulin signaling targets such as OBP2A/LCN13. Acts as a negative regulator of lipogenic gene expression in hepatocytes and thereby mediates the control of very low-density lipoprotein release. May play a role in neurite elongation and survival. The polypeptide is TSC22 domain family protein 4 (Rattus norvegicus (Rat)).